Consider the following 124-residue polypeptide: Small ribosomal subunit protein uS12 (124 aa).

Residues 1 to 23 (MATINQLVRKPRVRQKQKSNVPA) are disordered. D89 carries the 3-methylthioaspartic acid modification. The disordered stretch occupies residues 103–124 (DTAGVGDRRQGRSKYGAKRPKG). The span at 113 to 124 (GRSKYGAKRPKG) shows a compositional bias: basic residues.

This sequence belongs to the universal ribosomal protein uS12 family. As to quaternary structure, part of the 30S ribosomal subunit. Contacts proteins S8 and S17. May interact with IF1 in the 30S initiation complex.

Functionally, with S4 and S5 plays an important role in translational accuracy. In terms of biological role, interacts with and stabilizes bases of the 16S rRNA that are involved in tRNA selection in the A site and with the mRNA backbone. Located at the interface of the 30S and 50S subunits, it traverses the body of the 30S subunit contacting proteins on the other side and probably holding the rRNA structure together. The combined cluster of proteins S8, S12 and S17 appears to hold together the shoulder and platform of the 30S subunit. This chain is Small ribosomal subunit protein uS12, found in Nitrosococcus oceani (strain ATCC 19707 / BCRC 17464 / JCM 30415 / NCIMB 11848 / C-107).